Consider the following 174-residue polypeptide: RNA pyrophosphohydrolase (174 aa).

Residues Gly-6–Gln-145 form the Nudix hydrolase domain. Positions Gly-38–Gly-59 match the Nudix box motif.

The protein belongs to the Nudix hydrolase family. RppH subfamily. It depends on a divalent metal cation as a cofactor.

Functionally, accelerates the degradation of transcripts by removing pyrophosphate from the 5'-end of triphosphorylated RNA, leading to a more labile monophosphorylated state that can stimulate subsequent ribonuclease cleavage. The sequence is that of RNA pyrophosphohydrolase from Acidithiobacillus ferrooxidans (strain ATCC 53993 / BNL-5-31) (Leptospirillum ferrooxidans (ATCC 53993)).